The chain runs to 230 residues: Transmembrane protein 225 (230 aa).

Residues 1 to 8 (MMHIPNRS) lie on the Cytoplasmic side of the membrane. Residues 9-29 (IQAANIFFSSGAILLLIVGLI) form a helical membrane-spanning segment. Residues 30-71 (MEDWVELIPKVRKDKTTHSPWLGCCPPFWPEESLEVVRRIMR) lie on the Extracellular side of the membrane. A helical transmembrane segment spans residues 72 to 92 (MTLNISIYLNLIIGLQFSYMI). Residues 93-99 (SQNKCVH) lie on the Cytoplasmic side of the membrane. Residues 100-120 (LLVGFLSFFAGCLLFYAIIVY) traverse the membrane as a helical segment. At 121–139 (HHKLNKGQYVYFVNYKTKW) the chain is on the extracellular side. Residues 140 to 160 (IAFTVYLTIALFLTCGIFCFI) form a helical membrane-spanning segment. Topologically, residues 161 to 230 (QSTNRCECMK…TQARRVTWAL (70 aa)) are cytoplasmic. The short motif at 224-228 (RRVTW) is the RVxF element.

As to quaternary structure, interacts (via RVxF motif) with PPP1CC. In terms of tissue distribution, expressed in testis, epididymis and spermatozoa (at protein level). Not expressed in brain, heart, lung, liver, spleen, kidney and skeletal muscle.

It is found in the cytoplasmic vesicle. It localises to the secretory vesicle. The protein localises to the acrosome membrane. In terms of biological role, probably inhibits protein phosphatase 1 (PP1) in sperm via binding to catalytic subunit PPP1CC. The protein is Transmembrane protein 225 (Tmem225) of Mus musculus (Mouse).